Here is a 164-residue protein sequence, read N- to C-terminus: Phosphopantetheine adenylyltransferase (164 aa).

Residue Ser-9 coordinates substrate. ATP-binding positions include 9–10 (SF) and His-17. The substrate site is built by Lys-41, Thr-74, and Arg-88. ATP-binding positions include 89–91 (GVR), Glu-99, and 124–130 (NSFVASS).

The protein belongs to the bacterial CoaD family. Homohexamer. Requires Mg(2+) as cofactor.

The protein localises to the cytoplasm. The catalysed reaction is (R)-4'-phosphopantetheine + ATP + H(+) = 3'-dephospho-CoA + diphosphate. The protein operates within cofactor biosynthesis; coenzyme A biosynthesis; CoA from (R)-pantothenate: step 4/5. Functionally, reversibly transfers an adenylyl group from ATP to 4'-phosphopantetheine, yielding dephospho-CoA (dPCoA) and pyrophosphate. This Lactobacillus helveticus (strain DPC 4571) protein is Phosphopantetheine adenylyltransferase.